The following is a 1246-amino-acid chain: Putative helicase L115 (1246 aa).

The segment at 1 to 21 (MSKTITKKVNKKTKKSTKINP) is disordered. The region spanning 872-1030 (AKFTDGYHGF…YYMLKMLQTG (159 aa)) is the Helicase ATP-binding domain. ATP is bound at residue 885–892 (SDVGSGKT).

The chain is Putative helicase L115 from Acanthamoeba polyphaga (Amoeba).